Consider the following 414-residue polypeptide: MSGIIATYLIHDDSHNLEKKAEQIALGLTIGSWTHLPHLLQEQLKQHKGNVIHVEELAAHEHTNSYLRKKVKRGIIKIEYPLLNFSPDLPAILTTTFGKLSLDGEVKLIDLTFSDELKKQFPGPKFGIDGIRNLLQVHDRPLLMSIFKGMIGRNIGYLKTQLRDQAIGGVDIVKDDEILFENALTPLTKRIVSGKEVLQSVYETYGHKTLYAVNLTGRTFDLKENAKRAVQAGADILLFNVFSYGLDVLQSLAEDDEIPLPIMAHPAVSGAYSASKLYGVSSPLLLGKLLRYAGADFSLFPSPYGSVALEKEEALAISKYLTEGDSFFKKSFSVPSAGIHPGFVPFIVRDFGKDVVINAGGGIHGHPNGAQGGGKAFRAAIDATLQNKPLHEVDDINLHSALQIWGNPSHEVKL.

The active-site Proton acceptor is K99. Substrate-binding positions include K148, 174–177 (KDDE), H265, G338, and 360–361 (GG). The Mg(2+) site is built by K174, D176, and E177. The residue at position 174 (K174) is an N6-carboxylysine.

The protein belongs to the RuBisCO large chain family. Type IV subfamily. Homodimer. The cofactor is Mg(2+).

It carries out the reaction 5-methylsulfanyl-2,3-dioxopentyl phosphate = 2-hydroxy-5-methylsulfanyl-3-oxopent-1-enyl phosphate. It participates in amino-acid biosynthesis; L-methionine biosynthesis via salvage pathway; L-methionine from S-methyl-5-thio-alpha-D-ribose 1-phosphate: step 3/6. Functionally, catalyzes the enolization of 2,3-diketo-5-methylthiopentyl-1-phosphate (DK-MTP-1-P) into 2-hydroxy-3-keto-5-methylthiopentenyl-1-phosphate (HK-MTPenyl-1-P). This chain is 2,3-diketo-5-methylthiopentyl-1-phosphate enolase, found in Bacillus cereus (strain ATCC 10987 / NRS 248).